The following is a 404-amino-acid chain: Growth/differentiation factor 6-A (404 aa).

The N-terminal stretch at 1–24 (MDALRAVAFYALFVFLWSLPCCQS) is a signal peptide. A propeptide spanning residues 25–284 (AALISQKRSK…LQFKARRRRR (260 aa)) is cleaved from the precursor. Asn-91 carries N-linked (GlcNAc...) asparagine glycosylation. The disordered stretch occupies residues 263–304 (KSRGDDDEEESALQFKARRRRRTALNNRHGKRHGKKSKSRCS). Residues 278-304 (KARRRRRTALNNRHGKRHGKKSKSRCS) are compositionally biased toward basic residues. 3 cysteine pairs are disulfide-bonded: Cys-303–Cys-369, Cys-332–Cys-401, and Cys-336–Cys-403.

It belongs to the TGF-beta family. As to quaternary structure, homodimer; disulfide-linked. First expressed in late gastrula stage embryos (9.5 hours post fertilization (hpf)) in anterior neuroectoderm corresponding to the future dorsal part of the brain. Shortly after tailbud formation (11 hpf), expression expands to the entire neural region and is subsequently expressed in derivatives of the lateral neural plate and migrating neural crest cells, with the future midbrain and hindbrain showing strong expression. Also expressed weakly and transiently in the posterior embryo from 11.5 hpf to 15 hpf in the lateral mesoderm, and in ectoderm above the neural keel. At 14 hpf, expressed along the entire length of the embryo and starting around the 16-somite stage, expressed in the dorsal quadrant of the retina, representing the distal tip of the eye anlage. At this stage, also expressed in the hatching gland and the hypochord. At 24 hpf, expressed in the roof plate outlining the fourth brain ventricle, in the posterior hypochord, the primitive gut endoderm, the ventral tail mesenchyme, the dorsal part of the neural tube and the dorsal fin. Weakly expressed in the dorsal part of the posterior spinal cord and in blood cell precursors.

The protein resides in the secreted. In terms of biological role, growth factor that controls proliferation and cellular differentiation in the retina. Plays a key role in regulating apoptosis during retinal development. Establishes dorsal-ventral positional information in the retina and controls the formation of the retinotectal map. Functions maternally in dorsal/ventral patterning to induce the expression of the zygotic bmp2b and bmp4 genes and ventralize embryos. Zygotic expression does not appear to regulate axis specification, but instead functions to establish the integrity of the axial vessels during embryonic development. May be involved in maintaining the identity of cells of the dorsal-most neural tube and of at least a subset of neural crest cells. The sequence is that of Growth/differentiation factor 6-A (gdf6a) from Danio rerio (Zebrafish).